A 275-amino-acid polypeptide reads, in one-letter code: Tryptophan synthase alpha chain (275 aa).

Active-site proton acceptor residues include Glu-58 and Asp-69.

This sequence belongs to the TrpA family. As to quaternary structure, tetramer of two alpha and two beta chains. Ubiquitously expressed at low levels in seedlings, roots, hypocotyls, cotyledons, stems, leaves, inflorescences, flowers, siliques and seeds.

The protein resides in the cytoplasm. It carries out the reaction (1S,2R)-1-C-(indol-3-yl)glycerol 3-phosphate + L-serine = D-glyceraldehyde 3-phosphate + L-tryptophan + H2O. It catalyses the reaction (1S,2R)-1-C-(indol-3-yl)glycerol 3-phosphate = indole + D-glyceraldehyde 3-phosphate. Its pathway is amino-acid biosynthesis; L-tryptophan biosynthesis; L-tryptophan from chorismate: step 5/5. In terms of biological role, the alpha subunit is responsible for the aldol cleavage of indoleglycerol phosphate to indole and glyceraldehyde 3-phosphate. Contributes to the tryptophan-independent indole biosynthesis, and possibly to auxin production. This chain is Tryptophan synthase alpha chain (TRPA1), found in Arabidopsis thaliana (Mouse-ear cress).